The primary structure comprises 98 residues: NADH-ubiquinone oxidoreductase chain 4L (98 aa).

The next 3 membrane-spanning stretches (helical) occupy residues 1–21 (MSLV…GLLM), 29–49 (SLLC…LMIL), and 61–81 (IILL…LVMV).

This sequence belongs to the complex I subunit 4L family. In terms of assembly, core subunit of respiratory chain NADH dehydrogenase (Complex I) which is composed of 45 different subunits.

It is found in the mitochondrion inner membrane. It catalyses the reaction a ubiquinone + NADH + 5 H(+)(in) = a ubiquinol + NAD(+) + 4 H(+)(out). In terms of biological role, core subunit of the mitochondrial membrane respiratory chain NADH dehydrogenase (Complex I) which catalyzes electron transfer from NADH through the respiratory chain, using ubiquinone as an electron acceptor. Part of the enzyme membrane arm which is embedded in the lipid bilayer and involved in proton translocation. This Capra hircus (Goat) protein is NADH-ubiquinone oxidoreductase chain 4L (MT-ND4L).